We begin with the raw amino-acid sequence, 479 residues long: Ribosomal RNA small subunit methyltransferase F (479 aa).

Residues 128–134 (ASAPGSK), glutamate 152, aspartate 179, and aspartate 197 each bind S-adenosyl-L-methionine. The active-site Nucleophile is cysteine 250.

Belongs to the class I-like SAM-binding methyltransferase superfamily. RsmB/NOP family.

It is found in the cytoplasm. It catalyses the reaction cytidine(1407) in 16S rRNA + S-adenosyl-L-methionine = 5-methylcytidine(1407) in 16S rRNA + S-adenosyl-L-homocysteine + H(+). In terms of biological role, specifically methylates the cytosine at position 1407 (m5C1407) of 16S rRNA. In Shewanella halifaxensis (strain HAW-EB4), this protein is Ribosomal RNA small subunit methyltransferase F.